The primary structure comprises 66 residues: UPF0434 protein Jann_0424 (66 aa).

The protein belongs to the UPF0434 family.

The sequence is that of UPF0434 protein Jann_0424 from Jannaschia sp. (strain CCS1).